Consider the following 486-residue polypeptide: Glutamyl-tRNA(Gln) amidotransferase subunit A (486 aa).

Active-site charge relay system residues include Lys-77 and Ser-152. The active-site Acyl-ester intermediate is the Ser-176.

This sequence belongs to the amidase family. GatA subfamily. In terms of assembly, heterotrimer of A, B and C subunits.

The enzyme catalyses L-glutamyl-tRNA(Gln) + L-glutamine + ATP + H2O = L-glutaminyl-tRNA(Gln) + L-glutamate + ADP + phosphate + H(+). Allows the formation of correctly charged Gln-tRNA(Gln) through the transamidation of misacylated Glu-tRNA(Gln) in organisms which lack glutaminyl-tRNA synthetase. The reaction takes place in the presence of glutamine and ATP through an activated gamma-phospho-Glu-tRNA(Gln). The sequence is that of Glutamyl-tRNA(Gln) amidotransferase subunit A from Lactococcus lactis subsp. cremoris (strain SK11).